A 331-amino-acid chain; its full sequence is Aspartate carbamoyltransferase catalytic subunit (331 aa).

Carbamoyl phosphate contacts are provided by Arg55 and Thr56. Lys84 is a binding site for L-aspartate. 3 residues coordinate carbamoyl phosphate: Arg105, His133, and Gln136. Residues Arg166 and Arg229 each coordinate L-aspartate. Carbamoyl phosphate contacts are provided by Leu268 and Pro269.

This sequence belongs to the aspartate/ornithine carbamoyltransferase superfamily. ATCase family. Heterododecamer (2C3:3R2) of six catalytic PyrB chains organized as two trimers (C3), and six regulatory PyrI chains organized as three dimers (R2).

The enzyme catalyses carbamoyl phosphate + L-aspartate = N-carbamoyl-L-aspartate + phosphate + H(+). It functions in the pathway pyrimidine metabolism; UMP biosynthesis via de novo pathway; (S)-dihydroorotate from bicarbonate: step 2/3. Functionally, catalyzes the condensation of carbamoyl phosphate and aspartate to form carbamoyl aspartate and inorganic phosphate, the committed step in the de novo pyrimidine nucleotide biosynthesis pathway. This is Aspartate carbamoyltransferase catalytic subunit from Alkaliphilus oremlandii (strain OhILAs) (Clostridium oremlandii (strain OhILAs)).